A 178-amino-acid chain; its full sequence is 2-oxo-4-hydroxy-4-carboxy-5-ureidoimidazoline decarboxylase (178 aa).

His-67 functions as the Proton donor in the catalytic mechanism. Residues Pro-68, 84 to 88 (SQREQ), and 119 to 123 (FVLAA) contribute to the substrate site.

The protein belongs to the OHCU decarboxylase family.

The protein resides in the peroxisome. It catalyses the reaction 5-hydroxy-2-oxo-4-ureido-2,5-dihydro-1H-imidazole-5-carboxylate + H(+) = (S)-allantoin + CO2. It functions in the pathway purine metabolism; urate degradation; (S)-allantoin from urate: step 3/3. Its function is as follows. Catalyzes the stereoselective decarboxylation of 2-oxo-4-hydroxy-4-carboxy-5-ureidoimidazoline (OHCU) to (S)-allantoin. This is 2-oxo-4-hydroxy-4-carboxy-5-ureidoimidazoline decarboxylase (Urad) from Mus musculus (Mouse).